The chain runs to 427 residues: 3-phosphoshikimate 1-carboxyvinyltransferase (427 aa).

Residues Lys23, Ser24, and Arg28 each contribute to the 3-phosphoshikimate site. Lys23 contacts phosphoenolpyruvate. Residues Gly97 and Arg125 each coordinate phosphoenolpyruvate. 7 residues coordinate 3-phosphoshikimate: Ser170, Ser171, Gln172, Ser198, Asp314, Asn337, and Lys341. Gln172 is a binding site for phosphoenolpyruvate. The active-site Proton acceptor is the Asp314. The phosphoenolpyruvate site is built by Arg345, Arg387, and Lys412.

Belongs to the EPSP synthase family. Monomer.

The protein resides in the cytoplasm. The catalysed reaction is 3-phosphoshikimate + phosphoenolpyruvate = 5-O-(1-carboxyvinyl)-3-phosphoshikimate + phosphate. It participates in metabolic intermediate biosynthesis; chorismate biosynthesis; chorismate from D-erythrose 4-phosphate and phosphoenolpyruvate: step 6/7. In terms of biological role, catalyzes the transfer of the enolpyruvyl moiety of phosphoenolpyruvate (PEP) to the 5-hydroxyl of shikimate-3-phosphate (S3P) to produce enolpyruvyl shikimate-3-phosphate and inorganic phosphate. This chain is 3-phosphoshikimate 1-carboxyvinyltransferase, found in Buchnera aphidicola subsp. Baizongia pistaciae (strain Bp).